Here is a 674-residue protein sequence, read N- to C-terminus: E3 ubiquitin ligase Rnf157 (674 aa).

The segment at 277–316 (CVVCLSDVRDTLILPCRHLCLCNACADTLRYQASNCPICR) adopts an RING-type zinc-finger fold. Disordered stretches follow at residues 376–404 (LTPSPSAPPLRALGEARRPGGLPSYGSDI) and 433–610 (QNSS…TGRE). Positions 469-508 (TPESENLTLSSSGAIDQSSCTGTPLSPTISSPEDPLSSSL) are enriched in polar residues. Low complexity predominate over residues 509–526 (AQSIMSMASSHSQQSQLS). Residues 527–537 (TDTVSSMSGSY) are compositionally biased toward polar residues. Over residues 583 to 604 (EEMDAEGNVTEEEFASPEEDDG) the composition is skewed to acidic residues.

The protein resides in the cytoplasm. The enzyme catalyses S-ubiquitinyl-[E2 ubiquitin-conjugating enzyme]-L-cysteine + [acceptor protein]-L-lysine = [E2 ubiquitin-conjugating enzyme]-L-cysteine + N(6)-ubiquitinyl-[acceptor protein]-L-lysine.. E3 ubiquitin ligase that ubiquitinates apbb1 for its degradation by the proteasome and thus prevents apoptosis and promotes survival of neurons. Has a dual role in neurons as it is also required for dendrite growth and maintenance for which its ligase activity is not critical. May act as a scaffold molecule to regulate this process. Acts as a downstream effector of the interconnected PI3K and MAPK signaling pathways and thus participates in the regulation of the cell cycle. The sequence is that of E3 ubiquitin ligase Rnf157 (rnf157) from Xenopus laevis (African clawed frog).